Here is a 340-residue protein sequence, read N- to C-terminus: Cytosolic Fe-S cluster assembly factor NBP35 (340 aa).

The disordered stretch occupies residues 1–41 (MPSLVDPVANKTDEGNNRTDLKAPEPEHCPGTESEEAGKAD). The span at 11–30 (KTDEGNNRTDLKAPEPEHCP) shows a compositional bias: basic and acidic residues. Cys29, Cys43, Cys46, and Cys52 together coordinate [4Fe-4S] cluster. Position 82 to 89 (82 to 89 (GKGGVGKS)) interacts with ATP. Residues Cys255 and Cys258 each contribute to the [4Fe-4S] cluster site.

This sequence belongs to the Mrp/NBP35 ATP-binding proteins family. NUBP1/NBP35 subfamily. In terms of assembly, heterotetramer of 2 NBP35 and 2 CFD1 chains. [4Fe-4S] cluster serves as cofactor.

Its subcellular location is the cytoplasm. It localises to the nucleus. Its function is as follows. Component of the cytosolic iron-sulfur (Fe/S) protein assembly (CIA) machinery. Required for maturation of extramitochondrial Fe-S proteins. The NBP35-CFD1 heterotetramer forms a Fe-S scaffold complex, mediating the de novo assembly of an Fe-S cluster and its transfer to target apoproteins. Required for biogenesis and export of both ribosomal subunits, which may reflect a role in assembly of the Fe/S clusters in RLI1, a protein which performs rRNA processing and ribosome export. This chain is Cytosolic Fe-S cluster assembly factor NBP35, found in Yarrowia lipolytica (strain CLIB 122 / E 150) (Yeast).